Consider the following 549-residue polypeptide: Oxygen-dependent choline dehydrogenase (549 aa).

Asp4 to Glu33 is an FAD binding site. His465 serves as the catalytic Proton acceptor.

The protein belongs to the GMC oxidoreductase family. It depends on FAD as a cofactor.

It catalyses the reaction choline + A = betaine aldehyde + AH2. The catalysed reaction is betaine aldehyde + NAD(+) + H2O = glycine betaine + NADH + 2 H(+). The protein operates within amine and polyamine biosynthesis; betaine biosynthesis via choline pathway; betaine aldehyde from choline (cytochrome c reductase route): step 1/1. In terms of biological role, involved in the biosynthesis of the osmoprotectant glycine betaine. Catalyzes the oxidation of choline to betaine aldehyde and betaine aldehyde to glycine betaine at the same rate. The sequence is that of Oxygen-dependent choline dehydrogenase from Brucella canis (strain ATCC 23365 / NCTC 10854 / RM-666).